A 199-amino-acid polypeptide reads, in one-letter code: Holliday junction branch migration complex subunit RuvA (199 aa).

A domain I region spans residues 1–64; the sequence is MIALLTGRLA…EDSISLFGFR (64 aa). The domain II stretch occupies residues 65–143; it reads TLAEKEFFQL…KMDVAPSAQE (79 aa). Residues 144–154 are flexible linker; the sequence is APSSEAPAEVA. The tract at residues 154–199 is domain III; sequence ADDVASALVNLGYKEAVVRKVLAEMSIEPDASTEAVLRQALKVLMK.

The protein belongs to the RuvA family. As to quaternary structure, homotetramer. Forms an RuvA(8)-RuvB(12)-Holliday junction (HJ) complex. HJ DNA is sandwiched between 2 RuvA tetramers; dsDNA enters through RuvA and exits via RuvB. An RuvB hexamer assembles on each DNA strand where it exits the tetramer. Each RuvB hexamer is contacted by two RuvA subunits (via domain III) on 2 adjacent RuvB subunits; this complex drives branch migration. In the full resolvosome a probable DNA-RuvA(4)-RuvB(12)-RuvC(2) complex forms which resolves the HJ.

Its subcellular location is the cytoplasm. Functionally, the RuvA-RuvB-RuvC complex processes Holliday junction (HJ) DNA during genetic recombination and DNA repair, while the RuvA-RuvB complex plays an important role in the rescue of blocked DNA replication forks via replication fork reversal (RFR). RuvA specifically binds to HJ cruciform DNA, conferring on it an open structure. The RuvB hexamer acts as an ATP-dependent pump, pulling dsDNA into and through the RuvAB complex. HJ branch migration allows RuvC to scan DNA until it finds its consensus sequence, where it cleaves and resolves the cruciform DNA. In Geobacter sulfurreducens (strain ATCC 51573 / DSM 12127 / PCA), this protein is Holliday junction branch migration complex subunit RuvA.